Reading from the N-terminus, the 593-residue chain is UvrABC system protein C (593 aa).

The region spanning 14–91 is the GIY-YIG domain; that stretch reads DSPGCYLHKD…IQENMPKYNI (78 aa). Residues 196–231 enclose the UVR domain; sequence NKIVNGLTEKMKSAAMTMEFERAAEYRDLIEAISLL.

The protein belongs to the UvrC family. As to quaternary structure, interacts with UvrB in an incision complex.

It is found in the cytoplasm. Functionally, the UvrABC repair system catalyzes the recognition and processing of DNA lesions. UvrC both incises the 5' and 3' sides of the lesion. The N-terminal half is responsible for the 3' incision and the C-terminal half is responsible for the 5' incision. The sequence is that of UvrABC system protein C from Streptococcus agalactiae serotype III (strain NEM316).